Reading from the N-terminus, the 633-residue chain is Glutathione S-transferase C-terminal domain-containing protein (633 aa).

The 203-residue stretch at Leu-130–Ala-332 folds into the GST C-terminal domain. The disordered stretch occupies residues His-190 to Ser-232. At Ser-233 the chain carries Phosphoserine.

Belongs to the GSTCD family.

It is found in the cytoplasm. This chain is Glutathione S-transferase C-terminal domain-containing protein (GSTCD), found in Macaca fascicularis (Crab-eating macaque).